The chain runs to 343 residues: Methionine import ATP-binding protein MetN (343 aa).

The ABC transporter domain occupies 2–241 (IKLSNITKVF…PKTPLAQKFI (240 aa)). 38–45 (GASGAGKS) contacts ATP.

It belongs to the ABC transporter superfamily. Methionine importer (TC 3.A.1.24) family. The complex is composed of two ATP-binding proteins (MetN), two transmembrane proteins (MetI) and a solute-binding protein (MetQ).

The protein resides in the cell inner membrane. The catalysed reaction is L-methionine(out) + ATP + H2O = L-methionine(in) + ADP + phosphate + H(+). It carries out the reaction D-methionine(out) + ATP + H2O = D-methionine(in) + ADP + phosphate + H(+). Part of the ABC transporter complex MetNIQ involved in methionine import. Responsible for energy coupling to the transport system. This chain is Methionine import ATP-binding protein MetN, found in Escherichia coli O6:K15:H31 (strain 536 / UPEC).